A 1235-amino-acid polypeptide reads, in one-letter code: Gem-associated protein 5 (1235 aa).

One copy of the WD 1 repeat lies at S55–G102. Residues N227 to D263 are disordered. The segment covering E234–K248 has biased composition (basic and acidic residues). Phosphoserine is present on residues S289, S290, S351, and S354. The interval D340–G368 is disordered. The span at D352–G368 shows a compositional bias: polar residues. Residue T355 is modified to Phosphothreonine. A Phosphoserine modification is found at S357. T411 carries the post-translational modification Phosphothreonine. WD repeat units lie at residues I428 to K469, K475 to R512, T565 to L605, Y611 to H650, T690 to W730, L739 to K779, and T788 to L828. The LXXLL motif signature appears at L443–L447. Over residues K963 to S980 the composition is skewed to basic and acidic residues. The disordered stretch occupies residues K963–S983.

As to quaternary structure, component of the core survival motor neuron (SMN) complex composed of Smn, Gem2, Gem3, rig/Gem5 and one of 3 almost identical Gem4 paralogs encoded by Glos/Gem4a, Gem4b or Gem4c. Interacts with nuclear receptors EcR, svp (seven up), usp (ultraspiracle), Hr39 and Hr3. In terms of tissue distribution, expressed in the brain and salivary glands of early and late second instar larvae. Expressed in nurse cells and oocytes.

It is found in the nucleus. The protein localises to the cytoplasm. The protein resides in the U-body. Its subcellular location is the gem. Functionally, component of the survival motor neuron (SMN) complex that catalyzes the assembly of small nuclear ribonucleoproteins (snRNPs), the building blocks of the spliceosome, and thereby plays an important role in the splicing of cellular pre-mRNAs. Nuclear receptor cofactor for the ecdysone-regulated processes of molting and puparium formation. Acts downstream from ecdysone biosynthesis and release to control the expression of specific ecdysone-regulated genes such as Eip74EF (E74). Essential in muscle and neuronal tissues for motor function, including climbing ability and flight. The protein is Gem-associated protein 5 of Drosophila melanogaster (Fruit fly).